Consider the following 88-residue polypeptide: Large ribosomal subunit protein eL37 (88 aa).

Positions 1-24 (MTKGTTSFGKRHNKSHTQCRRCGR) are disordered. The segment covering 9–24 (GKRHNKSHTQCRRCGR) has biased composition (basic residues). Zn(2+) is bound by residues C19, C22, C34, and C37. The segment at 19-37 (CRRCGRKSYHIQKKTCSSC) adopts a C4-type zinc-finger fold.

Belongs to the eukaryotic ribosomal protein eL37 family. The cofactor is Zn(2+).

In terms of biological role, binds to the 23S rRNA. In Schistosoma mansoni (Blood fluke), this protein is Large ribosomal subunit protein eL37 (RPL37).